Consider the following 101-residue polypeptide: Small ribosomal subunit protein uS14 (101 aa).

It belongs to the universal ribosomal protein uS14 family. As to quaternary structure, part of the 30S ribosomal subunit. Contacts proteins S3 and S10.

Binds 16S rRNA, required for the assembly of 30S particles and may also be responsible for determining the conformation of the 16S rRNA at the A site. The polypeptide is Small ribosomal subunit protein uS14 (Pseudomonas syringae pv. tomato (strain ATCC BAA-871 / DC3000)).